The chain runs to 757 residues: Inhibitor of nuclear factor kappa-B kinase subunit beta (757 aa).

Residues 15-300 form the Protein kinase domain; the sequence is WEMKERLGTG…DPQYGPNGCF (286 aa). ATP-binding positions include 21-29 and Lys44; that span reads LGTGGFGNV. Asp145 serves as the catalytic Proton acceptor. Lys163 is covalently cross-linked (Glycyl lysine isopeptide (Lys-Gly) (interchain with G-Cter in ubiquitin)). Ser177 bears the Phosphoserine; by TBK1 and PKC/PRKCZ mark. S-nitrosocysteine is present on Cys179. Ser181 carries the post-translational modification Phosphoserine; by TBK1, PKC/PRKCZ and PDPK1. Residue Pro191 is modified to Hydroxyproline. Positions 458–479 are leucine-zipper; the sequence is LLRNNSCLSKMKNAMASTAQQL. Position 670 is a phosphoserine; by autocatalysis (Ser670). Ser672 carries the post-translational modification Phosphoserine. Phosphoserine; by autocatalysis is present on residues Ser675, Ser682, Ser689, Ser692, Ser697, Ser705, Ser733, and Ser740. Residues 683-703 form a disordered region; sequence HPGQLMSQPSSACDSLPESDK. The segment at 737–742 is NEMO-binding; that stretch reads LDWSWL.

Belongs to the protein kinase superfamily. Ser/Thr protein kinase family. I-kappa-B kinase subfamily. In terms of assembly, component of the I-kappa-B-kinase (IKK) core complex consisting of CHUK, IKBKB and IKBKG; probably four alpha/CHUK-beta/IKBKB dimers are associated with four gamma/IKBKG subunits. The IKK core complex seems to associate with regulatory or adapter proteins to form a IKK-signalosome holo-complex. The IKK complex associates with TERF2IP/RAP1, leading to promote IKK-mediated phosphorylation of RELA/p65. Part of a complex composed of NCOA2, NCOA3, CHUK/IKKA, IKBKB, IKBKG and CREBBP. Part of a 70-90 kDa complex at least consisting of CHUK/IKKA, IKBKB, NFKBIA, RELA, ELP1 and MAP3K14. Found in a membrane raft complex, at least composed of BCL10, CARD11, DPP4 and IKBKB. Interacts with SQSTM1 through PRKCZ or PRKCI. Forms an NGF-induced complex with IKBKB, PRKCI and TRAF6. May interact with MAVS/IPS1. Interacts with NALP2. Interacts with TICAM1. Interacts with FAF1; the interaction disrupts the IKK complex formation. Interacts with ATM. Part of a ternary complex consisting of TANK, IKBKB and IKBKG. Interacts with NIBP; the interaction is direct. Interacts with ARRB1 and ARRB2. Interacts with TRIM21. Interacts with NLRC5; prevents IKBKB phosphorylation and kinase activity. Interacts with PDPK1. Interacts with EIF2AK2/PKR. The phosphorylated form interacts with PPM1A and PPM1B. Interacts with ZNF268 isoform 2; the interaction is further increased in a TNF-alpha-dependent manner. Interacts with IKBKE. Interacts with ZC3H12A. Interacts with AKAP13. Interacts with LRRC14; disrupts IKBKB-IKBKG interaction preventing I-kappa-B-kinase (IKK) core complex formation and leading to a decrease of IKBKB phosphorylation and NF-kappaB activation. Interacts with SASH1. Interacts with ARFIP2. Interacts with FKBP5. Interacts with kinase TBK1; the complex interacts with STAT1, leading to phosphorylation of STAT1 on 'Thr-748' by IKBKB. In terms of processing, upon cytokine stimulation, phosphorylated on Ser-177 and Ser-181 by MEKK1 and/or MAP3K14/NIK as well as TBK1 and PRKCZ; which enhances activity. Phosphorylated by MAP3K7/TAK1 in response to NOD1 and NOD2 signaling, promoting activation and phosphorylation of NF-kappa-B inhibitors, leading to NF-kappa-B activation. Once activated, autophosphorylates on the C-terminal serine cluster; which decreases activity and prevents prolonged activation of the inflammatory response. Phosphorylated by the IKK-related kinases TBK1 and IKBKE, which is associated with reduced CHUK/IKKA and IKBKB activity and NF-kappa-B-dependent gene transcription. Dephosphorylated at Ser-177 and Ser-181 by PPM1A and PPM1B. Ubiquitinated. Monoubiquitination involves TRIM21 that leads to inhibition of Tax-induced NF-kappa-B signaling. 'Ser-163' may not serve as a monoubiquitination site. Ubiquitination on 'Ser-163' may modulate phosphorylation on C-terminal serine residues. Post-translationally, hydroxylated by PHD1/EGLN2, loss of hydroxylation under hypoxic conditions results in activation of NF-kappa-B. As to expression, detected in heart (at protein level). Expressed in liver, kidney and spleen.

The protein localises to the cytoplasm. It localises to the nucleus. It is found in the membrane raft. It carries out the reaction L-seryl-[I-kappa-B protein] + ATP = O-phospho-L-seryl-[I-kappa-B protein] + ADP + H(+). It catalyses the reaction L-seryl-[protein] + ATP = O-phospho-L-seryl-[protein] + ADP + H(+). The catalysed reaction is L-threonyl-[protein] + ATP = O-phospho-L-threonyl-[protein] + ADP + H(+). Functionally, serine kinase that plays an essential role in the NF-kappa-B signaling pathway which is activated by multiple stimuli such as inflammatory cytokines, bacterial or viral products, DNA damages or other cellular stresses. Acts as a part of the canonical IKK complex in the conventional pathway of NF-kappa-B activation. Phosphorylates inhibitors of NF-kappa-B on 2 critical serine residues. These modifications allow polyubiquitination of the inhibitors and subsequent degradation by the proteasome. In turn, free NF-kappa-B is translocated into the nucleus and activates the transcription of hundreds of genes involved in immune response, growth control, or protection against apoptosis. In addition to the NF-kappa-B inhibitors, phosphorylates several other components of the signaling pathway including NEMO/IKBKG, NF-kappa-B subunits RELA and NFKB1, as well as IKK-related kinases TBK1 and IKBKE. IKK-related kinase phosphorylations may prevent the overproduction of inflammatory mediators since they exert a negative regulation on canonical IKKs. Phosphorylates FOXO3, mediating the TNF-dependent inactivation of this pro-apoptotic transcription factor. Also phosphorylates other substrates including NAA10, NCOA3, BCL10 and IRS1. Phosphorylates RIPK1 at 'Ser-25' which represses its kinase activity and consequently prevents TNF-mediated RIPK1-dependent cell death. Phosphorylates the C-terminus of IRF5, stimulating IRF5 homodimerization and translocation into the nucleus. Following bacterial lipopolysaccharide (LPS)-induced TLR4 endocytosis, phosphorylates STAT1 at 'Thr-748' which restricts interferon signaling and anti-inflammatory responses and promotes innate inflammatory responses. IKBKB-mediated phosphorylation of STAT1 at 'Thr-748' promotes binding of STAT1 to the ARID5A promoter, resulting in transcriptional activation of ARID5A and subsequent ARID5A-mediated stabilization of IL6. It also promotes binding of STAT1 to the IL12B promoter and activation of IL12B transcription. In Mus musculus (Mouse), this protein is Inhibitor of nuclear factor kappa-B kinase subunit beta (Ikbkb).